The chain runs to 454 residues: Carbon catabolite repressor protein 4 homolog 5 (454 aa).

Residues 1–76 (MSGYERKNTT…SLRRRRRTKE (76 aa)) are disordered. The span at 31–41 (VYEKSNRKESI) shows a compositional bias: basic and acidic residues. A compositionally biased stretch (basic residues) spans 61–75 (VRHSKSSLRRRRRTK). E153 contributes to the Mg(2+) binding site.

The protein belongs to the CCR4/nocturin family. In terms of assembly, component of the CCR4-NOT complex, at least composed of CRR4 and CAF1 proteins. Mg(2+) is required as a cofactor.

The protein localises to the nucleus. It localises to the cytoplasm. The catalysed reaction is Exonucleolytic cleavage of poly(A) to 5'-AMP.. Functionally, acts as a catalytic component of the CCR4-NOT core complex, which in the nucleus seems to be a general transcription factor, and in the cytoplasm the major mRNA deadenylase involved in mRNA turnover. The polypeptide is Carbon catabolite repressor protein 4 homolog 5 (CCR4-5) (Arabidopsis thaliana (Mouse-ear cress)).